Here is an 89-residue protein sequence, read N- to C-terminus: Small ribosomal subunit protein bS20 (89 aa).

This sequence belongs to the bacterial ribosomal protein bS20 family.

Binds directly to 16S ribosomal RNA. The chain is Small ribosomal subunit protein bS20 from Wolbachia sp. subsp. Brugia malayi (strain TRS).